The following is a 758-amino-acid chain: Translation initiation factor IF-2 (758 aa).

Residues 55–168 form a disordered region; it reads EKNVGKQATQ…KTHQPSIPVK (114 aa). Polar residues-rich tracts occupy residues 60–78 and 86–95; these read KQATQNISQKSQSNGQQNH and QRQQSATSKP. A compositionally biased stretch (low complexity) spans 96–136; that stretch reads KVNNQQHSNSSNEKSKNTKGNQNRNMTQNNNNNNNNNNNNR. The tr-type G domain maps to 259–428; sequence ERPPVVTIMG…LLVAEVGELK (170 aa). The segment at 268-275 is G1; sequence GHVDHGKT. 268–275 contacts GTP; that stretch reads GHVDHGKT. A G2 region spans residues 293-297; it reads GITQH. Residues 314-317 are G3; it reads DTPG. GTP contacts are provided by residues 314-318 and 368-371; these read DTPGH and NKMD. Positions 368-371 are G4; it reads NKMD. The segment at 404–406 is G5; the sequence is SAL.

The protein belongs to the TRAFAC class translation factor GTPase superfamily. Classic translation factor GTPase family. IF-2 subfamily.

Its subcellular location is the cytoplasm. Its function is as follows. One of the essential components for the initiation of protein synthesis. Protects formylmethionyl-tRNA from spontaneous hydrolysis and promotes its binding to the 30S ribosomal subunits. Also involved in the hydrolysis of GTP during the formation of the 70S ribosomal complex. In Lysinibacillus sphaericus (strain C3-41), this protein is Translation initiation factor IF-2.